We begin with the raw amino-acid sequence, 509 residues long: Tyrosine-protein kinase STK (509 aa).

The span at 1–16 shows a compositional bias: polar residues; it reads MGPCCSKQTKALNNQP. The disordered stretch occupies residues 1 to 23; the sequence is MGPCCSKQTKALNNQPDKSKSKD. The N-myristoyl glycine moiety is linked to residue Gly-2. The region spanning 59–120 is the SH3 domain; that stretch reads PGVTIFVALY…PSTYVAPEKS (62 aa). The SH2 domain maps to 126-218; it reads WYFGDVKRAE…GLVCALTLPC (93 aa). One can recognise a Protein kinase domain in the interval 240–495; the sequence is LRLNRKLGAG…LQGVLEDYFV (256 aa). Residues 246-254 and Lys-268 each bind ATP; that span reads LGAGQFGEV. Asp-360 acts as the Proton acceptor in catalysis. A Phosphotyrosine; by autocatalysis modification is found at Tyr-390.

Belongs to the protein kinase superfamily. Tyr protein kinase family. SRC subfamily.

The catalysed reaction is L-tyrosyl-[protein] + ATP = O-phospho-L-tyrosyl-[protein] + ADP + H(+). This Hydra vulgaris (Hydra) protein is Tyrosine-protein kinase STK (STK).